The sequence spans 170 residues: Zinc finger matrin-type protein 5 (170 aa).

The segment at 51 to 79 (EQNKRPCRKFLLTGQCDFGSNCRFSHMSE) adopts a C3H1-type zinc-finger fold. A disordered region spans residues 150-170 (PPSLRAPPPGGWPLQPRVQWG).

Component of the U11/U12 snRNPs that are part of the U12-type spliceosome. Not found in the major spliceosome.

The protein resides in the nucleus. The chain is Zinc finger matrin-type protein 5 (ZMAT5) from Homo sapiens (Human).